Here is a 239-residue protein sequence, read N- to C-terminus: 1-(5-phosphoribosyl)-5-[(5-phosphoribosylamino)methylideneamino] imidazole-4-carboxamide isomerase (239 aa).

The active-site Proton acceptor is D8. The active-site Proton donor is the D129.

It belongs to the HisA/HisF family.

It localises to the cytoplasm. The catalysed reaction is 1-(5-phospho-beta-D-ribosyl)-5-[(5-phospho-beta-D-ribosylamino)methylideneamino]imidazole-4-carboxamide = 5-[(5-phospho-1-deoxy-D-ribulos-1-ylimino)methylamino]-1-(5-phospho-beta-D-ribosyl)imidazole-4-carboxamide. Its pathway is amino-acid biosynthesis; L-histidine biosynthesis; L-histidine from 5-phospho-alpha-D-ribose 1-diphosphate: step 4/9. The protein is 1-(5-phosphoribosyl)-5-[(5-phosphoribosylamino)methylideneamino] imidazole-4-carboxamide isomerase of Legionella pneumophila (strain Paris).